The sequence spans 942 residues: ATP-dependent RNA helicase DDX42 (942 aa).

The segment covering 1–18 has biased composition (gly residues); it reads MNWNKGGPGTKRGFGFGG. Residues 1–114 are disordered; it reads MNWNKGGPGT…KPIDSDSDDD (114 aa). N6-acetyllysine is present on K5. R12 carries the post-translational modification Omega-N-methylarginine. Positions 35 to 52 are enriched in low complexity; it reads SHSAFGATSSSSGFGKSA. S58 carries the phosphoserine modification. Residues 70–84 are compositionally biased toward acidic residues; that stretch reads DEENAYFEDEEEDSS. Phosphoserine is present on residues S96, S104, S109, and S111. Residues 116–157 adopt a coiled-coil conformation; the sequence is LEAFMAEVEDQAARDMKRLEEKDKERKNVKGIRDDIEEEDDQ. The interval 182–203 is disordered; the sequence is EYDSDGNPIAPTKKIIDPLPPI. S185 is modified (phosphoserine). The Q motif motif lies at 253 to 281; it reads SSFAHFGFDEQLMHQIRKSEYTQPTPIQC. The Helicase ATP-binding domain occupies 284-459; it reads VPVALSGRDM…RDILIDPIRV (176 aa). Position 297-304 (297-304) interacts with ATP; the sequence is AKTGSGKT. The short motif at 407–410 is the DEAD box element; that stretch reads DEAD. One can recognise a Helicase C-terminal domain in the interval 487–632; it reads WLTRRLVEFT…HVSKELLDLA (146 aa). Polar residues-rich tracts occupy residues 737 to 760 and 786 to 798; these read LNSV…TSAT and GVNN…NSRE. Disordered regions lie at residues 737 to 762 and 783 to 942; these read LNSV…ATKG and GAQG…RWDS. The interval 738–833 is necessary for interaction with TP53BP2; that stretch reads NSVPTNSAQQ…TGNRHSDSPR (96 aa). Residue S754 is modified to Phosphoserine. The span at 820-924 shows a compositional bias: basic and acidic residues; the sequence is SHGETGNRHS…KVDSKTDKTA (105 aa). K899 participates in a covalent cross-link: Glycyl lysine isopeptide (Lys-Gly) (interchain with G-Cter in SUMO2).

The protein belongs to the DEAD box helicase family. DDX42 subfamily. Transient component of the SF3B subcomplex of the 17S U2 SnRNP complex. Interacts (via the C-terminus) with TP53BP2; the interaction is not inhibitied by TP53BP2 ubiquitination and is independent of p53/TP53.

Its subcellular location is the cytoplasm. The protein localises to the nucleus. The enzyme catalyses ATP + H2O = ADP + phosphate + H(+). ATP-dependent RNA helicase that binds to partially double-stranded RNAs (dsRNAs) in order to unwind RNA secondary structures. Unwinding is promoted in the presence of single-strand binding proteins. Also mediates RNA duplex formation thereby displacing the single-strand RNA binding protein. ATP and ADP modulate its activity: ATP binding and hydrolysis by DDX42 triggers RNA strand separation, whereas the ADP-bound form of the protein triggers annealing of complementary RNA strands. Required for assembly of the 17S U2 SnRNP complex of the spliceosome, a large ribonucleoprotein complex that removes introns from transcribed pre-mRNAs: DDX42 associates transiently with the SF3B subcomplex of the 17S U2 SnRNP complex and is released after fulfilling its role in the assembly of 17S U2 SnRNP. Involved in the survival of cells by interacting with TP53BP2 and thereby counteracting the apoptosis-stimulating activity of TP53BP2. Relocalizes TP53BP2 to the cytoplasm. The protein is ATP-dependent RNA helicase DDX42 (DDX42) of Pongo abelii (Sumatran orangutan).